The sequence spans 116 residues: ATP-dependent Clp protease adapter protein ClpS (116 aa).

The span at 1-11 (MRRINTIMQGK) shows a compositional bias: polar residues. Residues 1–23 (MRRINTIMQGKTNGGNGPESGTV) form a disordered region.

This sequence belongs to the ClpS family. As to quaternary structure, binds to the N-terminal domain of the chaperone ClpA.

Its function is as follows. Involved in the modulation of the specificity of the ClpAP-mediated ATP-dependent protein degradation. The chain is ATP-dependent Clp protease adapter protein ClpS from Brucella abortus (strain S19).